The sequence spans 519 residues: Amphoterin-induced protein 2 (519 aa).

A signal peptide spans 1-38 (MSLRFHTLPTLPRAVKPGCRELLCLLVIAVMVSPSASG). One can recognise an LRRNT domain in the interval 39 to 67 (MCPTACICATDIVSCTNKNLSKVPGNLFR). Over 39–397 (MCPTACICAT…RSHAHEAFNT (359 aa)) the chain is Extracellular. Cystine bridges form between Cys40-Cys46 and Cys44-Cys53. Asn57 carries an N-linked (GlcNAc...) asparagine glycan. LRR repeat units lie at residues 68-89 (LIKRLDLSYNRIGLLDADWIPV), 93-114 (KLSTLILRHNNITSISTGSFST), 117-138 (NLKCLDLSSNRLKSVKSATFQE), 141-162 (ALEVLLLYNNHISYLDPAAFGG), 165-186 (HLQKLYLSGNFLTQFPMDLYTG), and 192-213 (DLTFLDVSYNRIPSIPMHHINL). N-linked (GlcNAc...) asparagine glycosylation is present at Asn103. The region spanning 227 to 283 (NPFVCDCSLYSLLIFWYRRHFSSVMDFKNDYTCRLWSDSRHSHQLQLLQESFLNCSY) is the LRRCT domain. Disulfide bonds link Cys231/Cys259 and Cys233/Cys281. Residues Asn280, Asn287, Asn344, Asn372, Asn380, Asn383, and Asn387 are each glycosylated (N-linked (GlcNAc...) asparagine). In terms of domain architecture, Ig-like C2-type spans 288 to 378 (GSFHALGFIH…RLLNETVDIM (91 aa)). A disulfide bridge links Cys309 with Cys362. A helical membrane pass occupies residues 398 to 418 (AFTTLAACVASIVLVLLYLYL). The Cytoplasmic portion of the chain corresponds to 419 to 519 (TPCPCKCKAK…FSDTPFVAST (101 aa)). The disordered stretch occupies residues 498-519 (RAKSDSDSVNSVFSDTPFVAST).

This sequence belongs to the immunoglobulin superfamily. AMIGO family. In terms of assembly, binds itself as well as AMIGO1 and AMIGO3. As to expression, highest level in cerebellum, retina, liver, and lung. Lower levels in cerebrum, kidney, small intestine, spleen and testis.

It localises to the cell membrane. The protein resides in the nucleus. In terms of biological role, required for depolarization-dependent survival of cultured cerebellar granule neurons. May mediate homophilic as well as heterophilic cell-cell interaction with AMIGO1 or AMIGO3. May contribute to signal transduction through its intracellular domain. This Mus musculus (Mouse) protein is Amphoterin-induced protein 2.